Here is a 24-residue protein sequence, read N- to C-terminus: Humanin-like 6 (24 aa).

The protein belongs to the humanin family. As to expression, expressed in skeletal muscle and testis.

It is found in the secreted. The protein resides in the cytoplasm. In terms of biological role, plays a role as a neuroprotective and antiapoptotic factor. The chain is Humanin-like 6 from Homo sapiens (Human).